Here is a 342-residue protein sequence, read N- to C-terminus: N-alpha-acetyl-L-2,4-diaminobutyric acid deacetylase (342 aa).

Residues 103 to 124 (TAGRRTSPMDGGNLNRSFPGDP) are disordered.

This sequence belongs to the DoeB deacetylase family. Zn(2+) serves as cofactor.

The protein resides in the cytoplasm. The enzyme catalyses (2S)-2-acetamido-4-aminobutanoate + H2O = L-2,4-diaminobutanoate + acetate. Functionally, involved in the degradation of ectoine, which allows H.elongata to utilize ectoine as both a carbon and a nitrogen source for growth. Catalyzes the deacetylation of N-alpha-acetyl-L-2,4-diaminobutyrate (N-alpha-Ac-DABA) to yield L-2,4-diaminobutyrate (DABA). In Halomonas elongata (strain ATCC 33173 / DSM 2581 / NBRC 15536 / NCIMB 2198 / 1H9), this protein is N-alpha-acetyl-L-2,4-diaminobutyric acid deacetylase.